The primary structure comprises 806 residues: Glycerol-3-phosphate acyltransferase (806 aa).

The HXXXXD motif motif lies at 305–310 (CHRSHM).

Belongs to the GPAT/DAPAT family.

It localises to the cell inner membrane. It carries out the reaction sn-glycerol 3-phosphate + an acyl-CoA = a 1-acyl-sn-glycero-3-phosphate + CoA. It participates in phospholipid metabolism; CDP-diacylglycerol biosynthesis; CDP-diacylglycerol from sn-glycerol 3-phosphate: step 1/3. In Salmonella agona (strain SL483), this protein is Glycerol-3-phosphate acyltransferase.